Here is a 590-residue protein sequence, read N- to C-terminus: Cell division protein FtsZ 1 (590 aa).

Residues 24–28 (GGGGN), 111–113 (GTG), Glu-142, Arg-146, and Asp-190 contribute to the GTP site. 2 disordered regions span residues 346 to 372 (AAVPAQPQPTVSLQPVPQPQPVQQPLQ) and 524 to 590 (EATN…RQSS). The segment covering 534–546 (AAAPSAASQQRRP) has biased composition (low complexity). Basic and acidic residues predominate over residues 559–576 (GQLDDHGRAAPQMRSHED).

This sequence belongs to the FtsZ family. Homodimer. Polymerizes to form a dynamic ring structure in a strictly GTP-dependent manner. Interacts directly with several other division proteins.

It is found in the cytoplasm. In terms of biological role, essential cell division protein that forms a contractile ring structure (Z ring) at the future cell division site. The regulation of the ring assembly controls the timing and the location of cell division. One of the functions of the FtsZ ring is to recruit other cell division proteins to the septum to produce a new cell wall between the dividing cells. Binds GTP and shows GTPase activity. This Rhizobium meliloti (strain 1021) (Ensifer meliloti) protein is Cell division protein FtsZ 1.